A 2515-amino-acid chain; its full sequence is Protein tudor (2515 aa).

Residues S226, S235, and S239 each carry the phosphoserine modification. Tudor domains lie at 455-513 (APEL…LLEI) and 641-696 (QLIL…HLEM). The residue at position 800 (S800) is a Phosphoserine. The segment at 840-996 (QAVKSVSGSK…SSSESVAAAK (157 aa)) is disordered. Over residues 890–900 (STGSYSSGMSS) the composition is skewed to low complexity. The segment covering 906 to 917 (RQQNGRTPIQSP) has biased composition (polar residues). Over residues 918 to 927 (RHNEKQEAKK) the composition is skewed to basic and acidic residues. 2 stretches are compositionally biased toward polar residues: residues 943-954 (GQQGNQRSQNAP) and 964-976 (QKSTLDGNISSKR). The segment covering 977-995 (SSGVGSDIASSSSESVAAA) has biased composition (low complexity). Tudor domains lie at 1062–1122 (QLKV…FADP) and 1355–1414 (KFDV…FYEH). The interval 1515–1589 (EEDKGRKETV…KPATPVPEVV (75 aa)) is disordered. The segment covering 1540–1553 (NDKDREPKKSKPAE) has biased composition (basic and acidic residues). Positions 1569 to 1584 (SPVPAEPAPVPKPATP) are enriched in pro residues. 5 Tudor domains span residues 1662–1718 (NVVN…SHIE), 1839–1898 (GFEK…SLPS), 2023–2082 (KAAV…LIKP), 2211–2269 (TTNS…PIPS), and 2392–2451 (DLKE…KPAR).

May form part of a piRNA processing complex consisting of tud, aub and AGO3. Interacts with AGO3 (when symmetrically dimethylated on Arg residues) and aub (when symmetrically dimethylated on Arg residues). Interacts with vls. Interacts with me31B/DDX6 (when symmetrically dimethylated on Arg residues).

It localises to the cytoplasm. The protein resides in the perinuclear region. Its subcellular location is the cytoplasmic ribonucleoprotein granule. Functionally, may act via the Piwi-interacting RNA (piRNA) metabolic process mediated by aub and AGO3 Piwi proteins, which mediates the repression of transposable elements during meiosis by forming complexes composed of piRNAs and Piwi proteins and governs the methylation and subsequent repression of transposons. Required during oogenesis for the formation of primordial germ cells and for normal abdominal segmentation. Not involved in repression of retroelements. In Drosophila melanogaster (Fruit fly), this protein is Protein tudor.